An 813-amino-acid chain; its full sequence is Sorting nexin-29 (813 aa).

In terms of domain architecture, RUN spans 36 to 180 (SDSDSRVTCL…ILFAINIDNK (145 aa)). Phosphoserine occurs at positions 268, 291, 292, 330, and 344. Residues 269 to 299 (FDDEEDEQNSGDVFKKTPGAGESSEDNSDRS) are disordered. Positions 346 to 357 (DDEDVDENEDDV) are enriched in acidic residues. The interval 346 to 378 (DDEDVDENEDDVYGNSSGRKHRGHSESPEKPLE) is disordered. Phosphoserine is present on residues Ser445 and Ser450. A coiled-coil region spans residues 466-545 (TISELRQATV…VLKVQLKKYV (80 aa)). Ser639 carries the post-translational modification Phosphoserine. Thr641 is modified (phosphothreonine). Ser642 and Ser646 each carry phosphoserine. The PX domain maps to 656–779 (ALINVWIPSV…PFFVDITPPG (124 aa)). The tract at residues 778–813 (PGEPVNSRPKAASRFPKLSRGQPRETRNVEPQSGDL) is disordered.

This sequence belongs to the sorting nexin family.

This Homo sapiens (Human) protein is Sorting nexin-29 (SNX29).